The primary structure comprises 138 residues: Small ribosomal subunit protein uS11c (138 aa).

Positions 1–24 (MTKPIPRIGSRRNGRIGSRKSGRR) are disordered. Basic residues predominate over residues 9 to 24 (GSRRNGRIGSRKSGRR).

Belongs to the universal ribosomal protein uS11 family. Part of the 30S ribosomal subunit.

It localises to the plastid. The protein localises to the chloroplast. In Liriodendron tulipifera (Tuliptree), this protein is Small ribosomal subunit protein uS11c.